A 430-amino-acid polypeptide reads, in one-letter code: Isochorismate synthase MenF (430 aa).

K187 functions as the Proton acceptor in the catalytic mechanism. The active-site Proton donor is E237. Mg(2+)-binding residues include E281 and E414.

Belongs to the isochorismate synthase family. Mg(2+) is required as a cofactor.

The catalysed reaction is chorismate = isochorismate. The protein operates within quinol/quinone metabolism; 1,4-dihydroxy-2-naphthoate biosynthesis; 1,4-dihydroxy-2-naphthoate from chorismate: step 1/7. It participates in quinol/quinone metabolism; menaquinone biosynthesis. Its function is as follows. Catalyzes the conversion of chorismate to isochorismate. This Haemophilus influenzae (strain ATCC 51907 / DSM 11121 / KW20 / Rd) protein is Isochorismate synthase MenF.